The following is a 573-amino-acid chain: Oxygen sensor histidine kinase response regulator DosT (573 aa).

2 consecutive GAF domains span residues 61-198 and 229-366; these read KLDA…GIAV and DPAM…ALAW. A heme-binding site is contributed by H147. The 194-residue stretch at 380 to 573 folds into the Histidine kinase domain; the sequence is ILTDRDRIAR…TLLRWSAPLR (194 aa). H392 is modified (phosphohistidine; by autocatalysis).

Mg(2+) is required as a cofactor. Heme serves as cofactor.

The protein localises to the cytoplasm. In terms of biological role, interacts with the two-component regulatory system DevR/DevS (DosR/DosS) involved in onset of the dormancy response. Required for full induction of the DevR (DosR) regulon; required during early adaptation to anaerobiosis, to start induction of the DevR regulon. May act as a direct hypoxia/oxygen sensor. May be the secondary sensor for CO. Donates a phosphate group to DevR (DosR). In Mycobacterium tuberculosis (strain CDC 1551 / Oshkosh), this protein is Oxygen sensor histidine kinase response regulator DosT (dosT).